A 229-amino-acid polypeptide reads, in one-letter code: GTP cyclohydrolase 1 (229 aa).

Zn(2+) is bound by residues Cys116, His119, and Cys187.

It belongs to the GTP cyclohydrolase I family. In terms of assembly, toroid-shaped homodecamer, composed of two pentamers of five dimers.

The enzyme catalyses GTP + H2O = 7,8-dihydroneopterin 3'-triphosphate + formate + H(+). It participates in cofactor biosynthesis; 7,8-dihydroneopterin triphosphate biosynthesis; 7,8-dihydroneopterin triphosphate from GTP: step 1/1. The chain is GTP cyclohydrolase 1 from Synechococcus sp. (strain JA-3-3Ab) (Cyanobacteria bacterium Yellowstone A-Prime).